A 1221-amino-acid chain; its full sequence is Adhesion G-protein coupled receptor G6 (1221 aa).

The signal sequence occupies residues 1 to 37 (MMFRSDRMWSCHWKWKPSPLLFLFALYIMCVPHSVWG). At 38 to 862 (CANCRVVLSN…ASQLDARNTK (825 aa)) the chain is on the extracellular side. Cysteines 41 and 67 form a disulfide. A CUB domain is found at 41–149 (CRVVLSNPSG…KGFNASYIRV (109 aa)). Glu-89 and Asp-97 together coordinate Ca(2+). Cysteines 94 and 111 form a disulfide. N-linked (GlcNAc...) asparagine glycosylation is present at Asn-121. Ca(2+)-binding residues include Asp-134, Ser-136, and Ile-137. N-linked (GlcNAc...) asparagine glycans are attached at residues Asn-143, Asn-206, Asn-258, Asn-314, Asn-324, Asn-353, Asn-438, Asn-445, Asn-452, Asn-485, Asn-488, and Asn-505. Positions 154–356 (RNQKVILPQT…ALKAESNLSC (203 aa)) constitute a Pentraxin (PTX) domain. Cystine bridges form between Cys-186/Cys-254 and Cys-231/Cys-277. Residues 473–837 (EPRLVLWALL…SDASETVCLC (365 aa)) form a mediates interaction with laminin-2 region. 2 cysteine pairs are disulfide-bonded: Cys-525/Cys-560 and Cys-548/Cys-580. N-linked (GlcNAc...) asparagine glycans are attached at residues Asn-563, Asn-593, Asn-600, Asn-605, Asn-667, Asn-673, Asn-695, Asn-704, Asn-750, Asn-776, Asn-811, and Asn-818. One can recognise a GAIN-B domain in the interval 670-853 (SHVNITTRNL…GVLMDLPRSA (184 aa)). 2 disulfides stabilise this stretch: Cys-803–Cys-835 and Cys-822–Cys-837. The GPS stretch occupies residues 803-853 (CAFWDLNKNKSFGGWNTSGCVAHRDSDASETVCLCNHFTHFGVLMDLPRSA). A stachel region spans residues 842–850 (HFGVLMDLP). Residues 863–883 (VLTFISYIGCGISAIFSAATL) traverse the membrane as a helical segment. Over 884–903 (LTYVAFEKLRRDYPSKILMN) the chain is Cytoplasmic. A helical membrane pass occupies residues 904 to 924 (LSTALLFLNLLFLLDGWITSF). The Extracellular segment spans residues 925–929 (NVDGL). Residues 930–950 (CIAVAVLLHFFLLATFTWMGL) traverse the membrane as a helical segment. Topologically, residues 951 to 970 (EAIHMYIALVKVFNTYIRRY) are cytoplasmic. A helical membrane pass occupies residues 971–991 (ILKFCIIGWGLPALVVSVVLA). The Extracellular segment spans residues 992–1024 (SRNNNEVYGKESYGKEKGDEFCWIQDPVIFYVT). The helical transmembrane segment at 1025–1045 (CAGYFGVMFFLNIAMFIVVMV) threads the bilayer. Residues 1046 to 1069 (QICGRNGKRSNRTLREEVLRNLRS) are Cytoplasmic-facing. The chain crosses the membrane as a helical span at residues 1070 to 1090 (VVSLTFLLGMTWGFAFFAWGP). Residues 1091-1092 (LN) lie on the Extracellular side of the membrane. The helical transmembrane segment at 1093 to 1113 (IPFMYLFSIFNSLQGLFIFIF) threads the bilayer. Position 1103 (Asn-1103) interacts with 17alpha-hydroxyprogesterone. The Cytoplasmic segment spans residues 1114–1221 (HCAMKENVQK…GQVLVKTGPC (108 aa)). The segment at 1156–1176 (NLGKSLSSSSIGSNSTYLTSK) is disordered. 2 positions are modified to phosphoserine: Ser-1165 and Ser-1168.

Belongs to the G-protein coupled receptor 2 family. Adhesion G-protein coupled receptor (ADGR) subfamily. In terms of assembly, heterodimer of 2 chains generated by proteolytic processing; the large extracellular N-terminal fragment and the membrane-bound C-terminal fragment predominantly remain associated and non-covalently linked. Interacts with Laminin-2; this interaction stabilizes the receptor in an inactive state. Laminin-2 polymerization could facilitate ADGRG6-NTF removal, thereby exposing the tethered agonist to drive myelination. Interacts with PRNP. Interacts with ITGB1. Interacts with LRP1. Proteolytically cleaved into 2 conserved sites: one in the GPS region of the GAIN-B domain (S1 site) and the other in the middle of the extracellular domain (S2 site). The proteolytic cleavage at S1 site generates an extracellular subunit and a seven-transmembrane subunit. Furin is involved in the cleavage of the S2 site generating a soluble fragment. Processing at the GPS region occurred independent of and probably prior to the cleavage at the S2 site. Proteolytic cleavage is required for activation of the receptor. Post-translationally, highly glycosylated. In terms of tissue distribution, expressed in placenta and to a lower extent in pancreas and liver. Detected in aortic endothelial cells but not in skin microvascular endothelial cells.

The protein resides in the cell membrane. Forms a heterodimer of 2 chains generated by proteolytic processing that remain associated through non-covalent interactions mediated by the GAIN-B domain. In the inactivated receptor, the Stachel sequence (also named stalk) is embedded in the GAIN-B domain, where it adopts a beta-strand conformation. On activation, the Stachel moves into the 7 transmembrane region and adopts a twisted hook-shaped configuration that forms contacts within the receptor, leading to coupling of a G-alpha protein, which activates signaling. The cleaved GAIN-B and N-terminal domains can then dissociate from the rest of the receptor. Adhesion G-protein coupled receptor (aGPCR) for steroid hormones, such as progesterone and 17alpha-hydroxyprogesterone (17OHP). Involved in many biological processes, such as myelination, sprouting angiogenesis, placenta, ear and cartilage development. Ligand binding causes a conformation change that triggers signaling via guanine nucleotide-binding proteins (G proteins) and modulates the activity of downstream effectors, such as adenylate cyclase. ADGRG6 is coupled to G(i) G alpha proteins and mediates inhibition of adenylate cyclase. Also able to couple to G(q) G proteins. Involved in myelination of the peripheral nervous system: required for differentiation of promyelinating Schwann cells and for normal myelination of axons. Also acts as a regulator of body length and bone mass. Acts as a regulator of blood-brain barrier formation in the central nervous system vie its association with LRP1 and ITGB1. This chain is Adhesion G-protein coupled receptor G6, found in Homo sapiens (Human).